Here is a 179-residue protein sequence, read N- to C-terminus: ATP-dependent protease subunit HslV (179 aa).

The active site involves Thr-7. Na(+)-binding residues include Gly-162, Cys-165, and Thr-168.

This sequence belongs to the peptidase T1B family. HslV subfamily. A double ring-shaped homohexamer of HslV is capped on each side by a ring-shaped HslU homohexamer. The assembly of the HslU/HslV complex is dependent on binding of ATP.

It localises to the cytoplasm. The catalysed reaction is ATP-dependent cleavage of peptide bonds with broad specificity.. Allosterically activated by HslU binding. Its function is as follows. Protease subunit of a proteasome-like degradation complex believed to be a general protein degrading machinery. This chain is ATP-dependent protease subunit HslV, found in Bordetella bronchiseptica (strain ATCC BAA-588 / NCTC 13252 / RB50) (Alcaligenes bronchisepticus).